The following is a 251-amino-acid chain: SPbeta prophage-derived putative antirepressor protein YoqD (251 aa).

The chain is SPbeta prophage-derived putative antirepressor protein YoqD (yoqD) from Bacillus subtilis (strain 168).